Reading from the N-terminus, the 505-residue chain is Histidine--tRNA ligase, mitochondrial (505 aa).

Residues 1–31 (MPHLGPLRRRAWAALLGQLLRPPSTVCTRGC) constitute a mitochondrion transit peptide. Residue serine 66 is modified to Phosphoserine. Residues 130-132 (DLT), arginine 157, glutamine 173, aspartate 177, arginine 326, and 330-331 (YY) contribute to the L-histidine site. Lysine 443 is subject to N6-acetyllysine.

This sequence belongs to the class-II aminoacyl-tRNA synthetase family. Homodimer.

Its subcellular location is the mitochondrion. The enzyme catalyses tRNA(His) + L-histidine + ATP = L-histidyl-tRNA(His) + AMP + diphosphate + H(+). Functionally, mitochondrial aminoacyl-tRNA synthetase that catalyzes the ATP-dependent ligation of histidine to the 3'-end of its cognate tRNA, via the formation of an aminoacyl-adenylate intermediate (His-AMP). The chain is Histidine--tRNA ligase, mitochondrial (Hars2) from Mus musculus (Mouse).